The primary structure comprises 384 residues: Potassium channel subfamily K member 18 (384 aa).

At 1-23 (MEVSGHPQARRCCPEALGKLFPG) the chain is on the cytoplasmic side. The chain crosses the membrane as a helical span at residues 24–44 (LCFLCFLVTYALVGAVVFSAI). The N-linked (GlcNAc...) asparagine glycan is linked to N70. An intramembrane region (pore-forming) is located at residues 103-129 (FLSSLFFCCTVFSTVGYGYIYPVTRLG). Residues T116, V117, G118, and Y119 each contribute to the K(+) site. The interval 116–121 (TVGYGY) is selectivity filter 1. A helical transmembrane segment spans residues 130–148 (KYLCMLYALFGIPLMFLVL). Residues 149-280 (TDTGDILATI…EVGQQVERLD (132 aa)) are Cytoplasmic-facing. Residues 200-205 (PQIIIS) are interaction with calcineurin. An interaction with YWHAH region spans residues 249–254 (RSNSCP). Phosphoserine is present on residues S252 and S264. The helical transmembrane segment at 281-301 (IPLPIIALIVFAYISCAAAIL) threads the bilayer. An intramembrane region (pore-forming) is located at residues 314–328 (FYFCFVTLTTIGFGD). The selectivity filter 2 stretch occupies residues 323 to 328 (TIGFGD). Residues 335–355 (NFFLFFSIYIIVGMEIVFIAF) form a helical membrane-spanning segment. Topologically, residues 356-384 (KLVQNRLIDIYKNVMLFFAKGKFYHLVKK) are cytoplasmic.

Belongs to the two pore domain potassium channel (TC 1.A.1.8) family. Homodimer. Heterodimer with KCNK2. Heterodimer with KCNK10. Interacts with calcineurin. Interacts with YWHAH, in a phosphorylation-dependent manner. In terms of processing, N-glycosylated. Phosphorylation of Ser-264 is required for the binding of 14-3-3eta/YWHAH. Calcineurin-mediated dephosphorylation enhances channel activity. Expressed in dorsal root ganglion and trigeminal ganglion neurons. Detected at low levels in spinal cord. Expressed in regulatory T cells (at protein level).

The protein localises to the cell membrane. The catalysed reaction is K(+)(in) = K(+)(out). Activated by volatile anesthetics but inhibited by amide local anesthetics. Inhibited by Ba(2+) ions. Inhibited by free polyunsaturated fatty acids. Channel conductance is sensitive to intracellular pH, it decreases at acidic pH and increases at basic pH. In contrast to its mouse ortholog, it is not regulated by extracellular protons. Insensitive to changes in temperature. Functionally, k(+) channel that conducts outward and inward rectifying currents at depolarized and hyperpolarized membrane potentials, respectively. The outward rectifying currents are voltage-dependent, coupled to K(+) electrochemical gradient across the membrane, whereas the inward currents can be induced in response to activation of Ca(2+)-mobilizing receptors. Homo- and heterodimerizes to form functional channels with distinct regulatory and gating properties. In trigeminal ganglia sensory neurons, the heterodimers of KCNK18/TRESK and KCNK2/TREK-1 or KCNK10/TREK-2 inhibit neuronal firing and neurogenic inflammation by stabilizing the resting membrane potential at K(+) equilibrium potential as well as by regulating the threshold of action potentials and the spike frequency. In thymocytes, conducts K(+) currents upon T cell receptor (TCR) signaling leading to sustained Ca(2+) influx and NF-kappa-B activation, FOXP3 transcription and positive selection of regulatory T cell (Treg) progenitor subsets. Appears to mediate the analgesics effects of hydroxy-alpha-sanshool, a metabolite naturally present in Schezuan pepper and other Xanthoxylum plants. The chain is Potassium channel subfamily K member 18 from Homo sapiens (Human).